We begin with the raw amino-acid sequence, 702 residues long: Cytolytic toxin-alpha (702 aa).

Residues 2–265 (SSDIIMAGLG…KADLLVRDIS (264 aa)) are structural MACPF/CDC pore-forming domain. N-linked (GlcNAc...) asparagine glycans are attached at residues Asn93, Asn100, Asn201, Asn287, and Asn311. The segment at 266-385 (QGLVRKVHSI…DIIEETKHKA (120 aa)) is structural FAT domain. The tract at residues 386–513 (VLSQSQMVKD…PIISAVEKIV (128 aa)) is thioredoxin (THX) domain. A B30.2/SPRY domain is found at 505–702 (IISAVEKIVD…RPYHGTVRLL (198 aa)). Asn530 carries N-linked (GlcNAc...) asparagine glycosylation.

The protein belongs to the SNTX/VTX toxin family. As to quaternary structure, heterodimer of alpha and beta subunits; non-covalently linked. Also associates into tetramers or even higher aggregates. In terms of processing, intrachain disulfide bonds may be present in the heterodimer. As to expression, expressed by the venom gland.

It is found in the secreted. In terms of biological role, this heterodimer induces potent hemolytic activities (when tested on rabbit erythrocytes, EC(50)=25-56 ng/mL) due to its ability to form pores in the cell membrane. The pore may be composed of 10 alpha/beta heterodimers. The toxin shows cardiovascular effects that include a vasorelaxant action that may involve the L-arginine-nitric oxid synthase pathway. In addition, it displays edema-inducing activities, increases vascular permeability. It also shows myotoxic activities and interferes irreversibly with neuromuscular function. It also induces irreversible platelet aggregation in rabbit or rat (but not in human or mouse) whole blood. In addition, it has been observed to increase spontaneous quantal acetylcholine release from isolated frog cutaneous pectoris motor endings. In Scorpaena plumieri (Spotted scorpionfish), this protein is Cytolytic toxin-alpha.